Here is a 283-residue protein sequence, read N- to C-terminus: Vitamin K epoxide reductase homolog (283 aa).

At M1 to R20 the chain is on the cytoplasmic side. A helical membrane pass occupies residues L21 to K41. Topologically, residues L42–E66 are periplasmic. Residues C50 and C56 are joined by a disulfide bond. V59 to A65 serves as a coordination point for a quinone. A helical transmembrane segment spans residues F67 to A87. The Cytoplasmic portion of the chain corresponds to V88 to P102. The chain crosses the membrane as a helical span at residues A103–V123. M111–M122 contributes to the a quinone binding site. Residues A124–Q128 are Periplasmic-facing. The chain crosses the membrane as a helical span at residues F129–L149. The cysteines at positions 130 and 133 are disulfide-linked. The Cytoplasmic portion of the chain corresponds to G150 to K158. Residues L159–A179 traverse the membrane as a helical segment. At N180 to R283 the chain is on the periplasmic side. The interval S186–R283 is thioredoxin-like domain. Cystine bridges form between C209-C212 and C231-C244.

Belongs to the VKOR family.

The protein localises to the membrane. Inhibited by ferulenol. In terms of biological role, thiol-disulfide oxidoreductase that catalyzes vitamin K-dependent disulfide bond formation in periplasmic target proteins. The chain is Vitamin K epoxide reductase homolog from Synechococcus sp. (strain JA-2-3B'a(2-13)) (Cyanobacteria bacterium Yellowstone B-Prime).